Reading from the N-terminus, the 248-residue chain is Pyridoxine 5'-phosphate synthase (248 aa).

Asn10 serves as a coordination point for 3-amino-2-oxopropyl phosphate. 12–13 (DH) contributes to the 1-deoxy-D-xylulose 5-phosphate binding site. Arg21 lines the 3-amino-2-oxopropyl phosphate pocket. The active-site Proton acceptor is the His46. 1-deoxy-D-xylulose 5-phosphate-binding residues include Arg48 and His53. Glu73 serves as the catalytic Proton acceptor. Residue Thr103 coordinates 1-deoxy-D-xylulose 5-phosphate. His194 (proton donor) is an active-site residue. 3-amino-2-oxopropyl phosphate is bound by residues Gly195 and 216 to 217 (GH).

This sequence belongs to the PNP synthase family. Homooctamer; tetramer of dimers.

It localises to the cytoplasm. It carries out the reaction 3-amino-2-oxopropyl phosphate + 1-deoxy-D-xylulose 5-phosphate = pyridoxine 5'-phosphate + phosphate + 2 H2O + H(+). Its pathway is cofactor biosynthesis; pyridoxine 5'-phosphate biosynthesis; pyridoxine 5'-phosphate from D-erythrose 4-phosphate: step 5/5. In terms of biological role, catalyzes the complicated ring closure reaction between the two acyclic compounds 1-deoxy-D-xylulose-5-phosphate (DXP) and 3-amino-2-oxopropyl phosphate (1-amino-acetone-3-phosphate or AAP) to form pyridoxine 5'-phosphate (PNP) and inorganic phosphate. The polypeptide is Pyridoxine 5'-phosphate synthase (Legionella pneumophila (strain Paris)).